Here is a 202-residue protein sequence, read N- to C-terminus: ATP-dependent Clp protease proteolytic subunit (202 aa).

Ser-101 functions as the Nucleophile in the catalytic mechanism. Residue His-126 is part of the active site.

Belongs to the peptidase S14 family. Component of the chloroplastic Clp protease core complex.

The protein resides in the plastid. It localises to the chloroplast stroma. It catalyses the reaction Hydrolysis of proteins to small peptides in the presence of ATP and magnesium. alpha-casein is the usual test substrate. In the absence of ATP, only oligopeptides shorter than five residues are hydrolyzed (such as succinyl-Leu-Tyr-|-NHMec, and Leu-Tyr-Leu-|-Tyr-Trp, in which cleavage of the -Tyr-|-Leu- and -Tyr-|-Trp bonds also occurs).. Its function is as follows. Cleaves peptides in various proteins in a process that requires ATP hydrolysis. Has a chymotrypsin-like activity. Plays a major role in the degradation of misfolded proteins. This is ATP-dependent Clp protease proteolytic subunit from Liriodendron tulipifera (Tuliptree).